Consider the following 518-residue polypeptide: Sensor protein kinase HptS (518 aa).

The next 2 helical transmembrane spans lie at 20–40 (IFPV…IYIW) and 222–242 (GITL…FGFI). Positions 297-513 (EQLIHSIEHT…LICYKIPLSR (217 aa)) constitute a Histidine kinase domain. At histidine 325 the chain carries Phosphohistidine; by autocatalysis.

In terms of processing, autophosphorylated.

Its subcellular location is the cell membrane. The enzyme catalyses ATP + protein L-histidine = ADP + protein N-phospho-L-histidine.. In terms of biological role, member of the two-component regulatory system HptS/HptR that regulates genes involved in hexose phosphate transport system in response to changes in extracellular phosphate sources. May act as a sensor protein kinase which is autophosphorylated at a histidine residue and transfers its phosphate group to the conserved aspartic acid residue in the regulatory domain of HptS. In turn, HptS antagonizes CcpA-dependent transcription of a subset of CcpA-regulated genes involved in antibiotic susceptibility. The polypeptide is Sensor protein kinase HptS (hptS) (Staphylococcus aureus (strain MSSA476)).